A 258-amino-acid chain; its full sequence is UPF0246 protein Asuc_0575 (258 aa).

This sequence belongs to the UPF0246 family.

This Actinobacillus succinogenes (strain ATCC 55618 / DSM 22257 / CCUG 43843 / 130Z) protein is UPF0246 protein Asuc_0575.